A 168-amino-acid chain; its full sequence is MPTLLLGAAIPFGTIAYTLFIFLLLLVMLRKFAWGPLMGIMKEREEHVANEIDAAERNNAEAKKLVEEQREMLKQSRVEAQELIERAKKQAVDQKDVIVAAAKEEAESIKASAVQEIQREKEQAIAALQEQVASLSVQIASKVIEKELKEEDQVKLIRDYIKEVGEAR.

The helical transmembrane segment at 9-29 (AIPFGTIAYTLFIFLLLLVML) threads the bilayer.

Belongs to the ATPase B chain family. F-type ATPases have 2 components, F(1) - the catalytic core - and F(0) - the membrane proton channel. F(1) has five subunits: alpha(3), beta(3), gamma(1), delta(1), epsilon(1). F(0) has three main subunits: a(1), b(2) and c(10-14). The alpha and beta chains form an alternating ring which encloses part of the gamma chain. F(1) is attached to F(0) by a central stalk formed by the gamma and epsilon chains, while a peripheral stalk is formed by the delta and b chains.

Its subcellular location is the cell membrane. In terms of biological role, f(1)F(0) ATP synthase produces ATP from ADP in the presence of a proton or sodium gradient. F-type ATPases consist of two structural domains, F(1) containing the extramembraneous catalytic core and F(0) containing the membrane proton channel, linked together by a central stalk and a peripheral stalk. During catalysis, ATP synthesis in the catalytic domain of F(1) is coupled via a rotary mechanism of the central stalk subunits to proton translocation. Functionally, component of the F(0) channel, it forms part of the peripheral stalk, linking F(1) to F(0). This is ATP synthase subunit b from Bacillus thuringiensis (strain Al Hakam).